Here is a 317-residue protein sequence, read N- to C-terminus: Beta-ketoacyl-[acyl-carrier-protein] synthase III (317 aa).

Catalysis depends on residues C112 and H244. An ACP-binding region spans residues 245–249; the sequence is QANLR. The active site involves N274.

It belongs to the thiolase-like superfamily. FabH family. As to quaternary structure, homodimer.

Its subcellular location is the cytoplasm. It carries out the reaction malonyl-[ACP] + acetyl-CoA + H(+) = 3-oxobutanoyl-[ACP] + CO2 + CoA. The protein operates within lipid metabolism; fatty acid biosynthesis. Catalyzes the condensation reaction of fatty acid synthesis by the addition to an acyl acceptor of two carbons from malonyl-ACP. Catalyzes the first condensation reaction which initiates fatty acid synthesis and may therefore play a role in governing the total rate of fatty acid production. Possesses both acetoacetyl-ACP synthase and acetyl transacylase activities. Its substrate specificity determines the biosynthesis of branched-chain and/or straight-chain of fatty acids. The chain is Beta-ketoacyl-[acyl-carrier-protein] synthase III from Salmonella paratyphi A (strain ATCC 9150 / SARB42).